Reading from the N-terminus, the 255-residue chain is 3-hydroxyacyl-CoA dehydrogenase type-2 (255 aa).

Ser-14, Leu-16, Asp-35, Asp-58, Val-59, and Cys-85 together coordinate NAD(+). Ser-149 provides a ligand contact to substrate. 4 residues coordinate NAD(+): Tyr-162, Lys-166, Phe-195, and Thr-197. Catalysis depends on Tyr-162, which acts as the Proton acceptor.

This sequence belongs to the short-chain dehydrogenases/reductases (SDR) family. As to quaternary structure, component of mitochondrial ribonuclease P, a complex composed of rswl/MRPP1, scu/MRPP2 and mldr/MRPP3. Found in many tissues including CNS, imaginal disks and salivary glands. Highest expression in both embryonic gonadal primordia and mature ovaries and testes.

The protein resides in the mitochondrion. It carries out the reaction a (3S)-3-hydroxyacyl-CoA + NAD(+) = a 3-oxoacyl-CoA + NADH + H(+). The enzyme catalyses (3S)-3-hydroxybutanoyl-CoA + NAD(+) = acetoacetyl-CoA + NADH + H(+). It catalyses the reaction testosterone + NAD(+) = androst-4-ene-3,17-dione + NADH + H(+). The catalysed reaction is 5alpha-androstane-3alpha,17beta-diol + NAD(+) = 17beta-hydroxy-5alpha-androstan-3-one + NADH + H(+). It carries out the reaction 17beta-estradiol + NAD(+) = estrone + NADH + H(+). The enzyme catalyses ursodeoxycholate + NAD(+) = 7-oxolithocholate + NADH + H(+). It catalyses the reaction 3beta,7beta-dihydroxy-5beta-cholan-24-oate + NAD(+) = 3beta-hydroxy-7-oxo-5beta-cholan-24-oate + NADH + H(+). The catalysed reaction is 11-dehydrocorticosterone + NAD(+) = pregn-4-ene-3,11,20,21-tetraone + NADH + H(+). It carries out the reaction cortisone + NAD(+) = 17alpha-hydroxypregn-4-en-3,11,20-trione-21-al + NADH + H(+). The enzyme catalyses cortisol + NAD(+) = 11beta,17alpha-dihydroxypregn-4-ene-3,20,21-trione + NADH + H(+). It catalyses the reaction 5alpha-pregnan-20beta-ol-3-one + NAD(+) = 5alpha-pregnane-3,20-dione + NADH + H(+). The catalysed reaction is 17beta-hydroxy-5alpha-androstan-3-one + NAD(+) = 5alpha-androstan-3,17-dione + NADH + H(+). Functionally, mitochondrial dehydrogenase involved in pathways of fatty acid, and steroid metabolism. Versatile enzyme presenting two types of activity; L-3-hydroxyacyl-CoA dehydrogenase ((3S)-3-hydroxyacyl-CoA dehydrogenase) activity and hydroxysteroid dehydrogenase (HSD) activity with a wide substrate spectrum. As a (3S)-3-hydroxyacyl-CoA dehydrogenase, it functions in the third step of the fatty acid beta-oxidation pathway, a major metabolic process in which fatty acids are oxidized to provide a significant source of energy, while also generating acyl-CoA metabolites used by many metabolic routes. As a HSD, it functions in the degradation pathways of glucocorticoids and sex steroids and epimerization of bile acids; catalyzes the beta-oxidation at position 17 of androgens and estrogens, has 3-alpha-hydroxysteroid dehydrogenase activity with androsterone, and carries out oxidative conversions of 7-beta-hydroxylated bile acids like ursodeoxycholate or isoursodeoxycholate (also known as 3-beta,7-beta-dihydroxy-5-beta-cholan-24-oate or 7-beta-hydroxyisolithocholate, respectively). Also exhibits 20-beta-OH and 21-OH dehydrogenase activities with C21 steroids. Essential for structural and functional integrity of mitochondria. Required for cell survival during embryonic development. May play a role in germline formation. Its function is as follows. In addition to mitochondrial dehydrogenase activity, moonlights as a component of mitochondrial ribonuclease P, a complex that cleaves tRNA molecules in their 5'-ends. Essential for the structural and functional integrity of mitochondria. Function is essential for pupal development. The chain is 3-hydroxyacyl-CoA dehydrogenase type-2 from Drosophila melanogaster (Fruit fly).